Here is a 682-residue protein sequence, read N- to C-terminus: DNA-directed RNA polymerase subunit beta' (682 aa).

Positions 69, 71, 87, and 90 each coordinate Zn(2+). Positions 489, 491, and 493 each coordinate Mg(2+).

The protein belongs to the RNA polymerase beta' chain family. RpoC1 subfamily. In plastids the minimal PEP RNA polymerase catalytic core is composed of four subunits: alpha, beta, beta', and beta''. When a (nuclear-encoded) sigma factor is associated with the core the holoenzyme is formed, which can initiate transcription. Requires Mg(2+) as cofactor. The cofactor is Zn(2+).

Its subcellular location is the plastid. It localises to the chloroplast. The enzyme catalyses RNA(n) + a ribonucleoside 5'-triphosphate = RNA(n+1) + diphosphate. Functionally, DNA-dependent RNA polymerase catalyzes the transcription of DNA into RNA using the four ribonucleoside triphosphates as substrates. The protein is DNA-directed RNA polymerase subunit beta' of Agrostis stolonifera (Creeping bentgrass).